The following is a 445-amino-acid chain: UPF0210 protein Ccon26_06850 (445 aa).

This sequence belongs to the UPF0210 family. As to quaternary structure, homodimer.

This is UPF0210 protein Ccon26_06850 from Campylobacter concisus (strain 13826).